Consider the following 746-residue polypeptide: Proline--tRNA ligase (746 aa).

The required for editing of incorrectly charged tRNA stretch occupies residues Met1–Asn223. Positions Thr181 to Glu201 are enriched in basic and acidic residues. The tract at residues Thr181 to Ile226 is disordered. The segment covering Asn204–Asn224 has biased composition (low complexity). Arg390 contributes to the L-proline binding site. ATP is bound by residues Arg390–Lys394, Arg401–Phe405, and Gln475–Ala477. His480 lines the L-proline pocket. Thr512–Arg514 contributes to the ATP binding site.

It belongs to the class-II aminoacyl-tRNA synthetase family. ProS type 3 subfamily. In terms of assembly, homodimer.

It is found in the cytoplasm. The catalysed reaction is tRNA(Pro) + L-proline + ATP = L-prolyl-tRNA(Pro) + AMP + diphosphate. Inhibited by the quinazolinone-based compound febrifugine from the Chinese plant Dichroa febrifuga which is used to treat malaria-associated fever. Also inhibited by febrifugine derivatives such as halofuginone. Functionally, catalyzes the attachment of proline to tRNA(Pro) in a two-step reaction: proline is first activated by ATP to form Pro-AMP and then transferred to the acceptor end of tRNA(Pro). Functions in trans to edit the amino acid moiety from incorrectly charged Ala-tRNA(Pro). Has no activity on correctly charged Pro-tRNA(Pro) or Ala-tRNA(Ala). In Plasmodium falciparum (isolate 3D7), this protein is Proline--tRNA ligase.